A 329-amino-acid polypeptide reads, in one-letter code: Diaminopimelate epimerase (329 aa).

Substrate-binding residues include Asn-14 and Asn-73. The Proton donor role is filled by Cys-82. Substrate contacts are provided by residues 83–84 (GN), Asn-170, Asn-206, and 224–225 (ER). The active-site Proton acceptor is the Cys-233. Residue 234 to 235 (GT) coordinates substrate.

The protein belongs to the diaminopimelate epimerase family. Homodimer.

Its subcellular location is the cytoplasm. The enzyme catalyses (2S,6S)-2,6-diaminopimelate = meso-2,6-diaminopimelate. It participates in amino-acid biosynthesis; L-lysine biosynthesis via DAP pathway; DL-2,6-diaminopimelate from LL-2,6-diaminopimelate: step 1/1. Functionally, catalyzes the stereoinversion of LL-2,6-diaminopimelate (L,L-DAP) to meso-diaminopimelate (meso-DAP), a precursor of L-lysine and an essential component of the bacterial peptidoglycan. This chain is Diaminopimelate epimerase, found in Listeria innocua serovar 6a (strain ATCC BAA-680 / CLIP 11262).